The chain runs to 342 residues: Autoinducer 2 import system permease protein LsrC (342 aa).

The Periplasmic portion of the chain corresponds to 1 to 13 (MLKFIQNNREITA). A helical membrane pass occupies residues 14 to 34 (LLAVVLLFVLPGFLDRQYLSV). The Cytoplasmic segment spans residues 35-38 (QTLT). Residues 39 to 59 (MVYSSAQILILLAMGATLVML) traverse the membrane as a helical segment. The Periplasmic portion of the chain corresponds to 60-69 (TRNIDVSVGS). The chain crosses the membrane as a helical span at residues 70–90 (ITGMCAVLLGMLLNAGYSLPV). Residues 91–92 (AC) lie on the Cytoplasmic side of the membrane. A helical transmembrane segment spans residues 93-113 (VATLLLGLLAGFFNGALVAWL). A topological domain (periplasmic) is located at residue Lys114. The helical transmembrane segment at 115 to 135 (IPAIVATLGTLGLYRGIMLLW) threads the bilayer. Over 136 to 154 (TGGKWIEGLPAELKQLSAP) the chain is Cytoplasmic. The chain crosses the membrane as a helical span at residues 155–175 (LLLGISAIGWLTIILVAFMAW). The Periplasmic portion of the chain corresponds to 176-212 (LLAKTAFGRSFYATGDNLQGARQLGVRTEAIRIVAFS). Residues 213–233 (LNGCMAALAGIVFASQIGFIL) form a helical membrane-spanning segment. Topologically, residues 234–251 (NQTGTGLEMKAIAACVLG) are cytoplasmic. Residues 252 to 272 (GISLLGGSGAIIGAVLGAWFL) form a helical membrane-spanning segment. Topologically, residues 273 to 283 (TQIDSVLVLLR) are periplasmic. The helical transmembrane segment at 284–304 (IPAWWNDFIAGLVLLAVLVFD) threads the bilayer. Topologically, residues 305-342 (GRLRCALERNLRRQKYARFMTPPPSVKPASSGKKREAA) are cytoplasmic.

It belongs to the binding-protein-dependent transport system permease family. AraH/RbsC subfamily. As to quaternary structure, the complex is composed of two ATP-binding proteins (LsrA), two transmembrane proteins (LsrC and LsrD) and a solute-binding protein (LsrB).

The protein resides in the cell inner membrane. In terms of biological role, part of the ABC transporter complex LsrABCD involved in autoinducer 2 (AI-2) import. Probably responsible for the translocation of the substrate across the membrane. This is Autoinducer 2 import system permease protein LsrC (lsrC) from Shigella flexneri.